A 317-amino-acid chain; its full sequence is Ribosomal protein L11 methyltransferase (317 aa).

Threonine 158, glycine 179, aspartate 201, and asparagine 244 together coordinate S-adenosyl-L-methionine.

Belongs to the methyltransferase superfamily. PrmA family.

The protein resides in the cytoplasm. The catalysed reaction is L-lysyl-[protein] + 3 S-adenosyl-L-methionine = N(6),N(6),N(6)-trimethyl-L-lysyl-[protein] + 3 S-adenosyl-L-homocysteine + 3 H(+). Methylates ribosomal protein L11. This is Ribosomal protein L11 methyltransferase from Lactococcus lactis subsp. cremoris (strain SK11).